The sequence spans 144 residues: Large ribosomal subunit protein uL11 (144 aa).

The protein belongs to the universal ribosomal protein uL11 family. Part of the ribosomal stalk of the 50S ribosomal subunit. Interacts with L10 and the large rRNA to form the base of the stalk. L10 forms an elongated spine to which L12 dimers bind in a sequential fashion forming a multimeric L10(L12)X complex. Post-translationally, one or more lysine residues are methylated.

Its function is as follows. Forms part of the ribosomal stalk which helps the ribosome interact with GTP-bound translation factors. This chain is Large ribosomal subunit protein uL11, found in Nocardia farcinica (strain IFM 10152).